The sequence spans 261 residues: Cytochrome c oxidase subunit 3 (261 aa).

The Mitochondrial matrix segment spans residues 1–15 (MTHQLHAYHMVKPSP). A helical transmembrane segment spans residues 16–34 (WPLTGALSAFLLTSGLIMW). Topologically, residues 35–40 (FHFYST) are mitochondrial intermembrane. Residues 41–66 (ALLTLGLLTNVLTMYQWWRDIIREST) form a helical membrane-spanning segment. Over 67–72 (YQGHHT) the chain is Mitochondrial matrix. Residues 73–105 (TPVQKSLRYGMTLFIISEVFFFAGFFWAFYHSS) traverse the membrane as a helical segment. Over 106-128 (LAPTPRLGCHWPPTGITPLNPLE) the chain is Mitochondrial intermembrane. The chain crosses the membrane as a helical span at residues 129 to 152 (VPLLNTSVLLASGVTITWAHHSLM). The Mitochondrial matrix segment spans residues 153 to 155 (NGN). A helical membrane pass occupies residues 156-183 (RKQTIQALLITILLGTYFTLVQISEYFE). At 184–190 (APFTISD) the chain is on the mitochondrial intermembrane side. The helical transmembrane segment at 191–223 (GIYGSTFFVATGFHGLHVIIGSTFLLICLIRQL) threads the bilayer. Residues 224-232 (FYHFTPSHH) are Mitochondrial matrix-facing. Residues 233-256 (FGFEAAAWYWHFVDVIWLFLYISI) form a helical membrane-spanning segment. At 257 to 261 (YWWGS) the chain is on the mitochondrial intermembrane side.

Belongs to the cytochrome c oxidase subunit 3 family. As to quaternary structure, component of the cytochrome c oxidase (complex IV, CIV), a multisubunit enzyme composed of 14 subunits. The complex is composed of a catalytic core of 3 subunits MT-CO1, MT-CO2 and MT-CO3, encoded in the mitochondrial DNA, and 11 supernumerary subunits COX4I, COX5A, COX5B, COX6A, COX6B, COX6C, COX7A, COX7B, COX7C, COX8 and NDUFA4, which are encoded in the nuclear genome. The complex exists as a monomer or a dimer and forms supercomplexes (SCs) in the inner mitochondrial membrane with NADH-ubiquinone oxidoreductase (complex I, CI) and ubiquinol-cytochrome c oxidoreductase (cytochrome b-c1 complex, complex III, CIII), resulting in different assemblies (supercomplex SCI(1)III(2)IV(1) and megacomplex MCI(2)III(2)IV(2)).

It is found in the mitochondrion inner membrane. The enzyme catalyses 4 Fe(II)-[cytochrome c] + O2 + 8 H(+)(in) = 4 Fe(III)-[cytochrome c] + 2 H2O + 4 H(+)(out). In terms of biological role, component of the cytochrome c oxidase, the last enzyme in the mitochondrial electron transport chain which drives oxidative phosphorylation. The respiratory chain contains 3 multisubunit complexes succinate dehydrogenase (complex II, CII), ubiquinol-cytochrome c oxidoreductase (cytochrome b-c1 complex, complex III, CIII) and cytochrome c oxidase (complex IV, CIV), that cooperate to transfer electrons derived from NADH and succinate to molecular oxygen, creating an electrochemical gradient over the inner membrane that drives transmembrane transport and the ATP synthase. Cytochrome c oxidase is the component of the respiratory chain that catalyzes the reduction of oxygen to water. Electrons originating from reduced cytochrome c in the intermembrane space (IMS) are transferred via the dinuclear copper A center (CU(A)) of subunit 2 and heme A of subunit 1 to the active site in subunit 1, a binuclear center (BNC) formed by heme A3 and copper B (CU(B)). The BNC reduces molecular oxygen to 2 water molecules using 4 electrons from cytochrome c in the IMS and 4 protons from the mitochondrial matrix. The polypeptide is Cytochrome c oxidase subunit 3 (MT-CO3) (Papio hamadryas (Hamadryas baboon)).